The chain runs to 228 residues: Small ribosomal subunit protein uS3 (228 aa).

One can recognise a KH type-2 domain in the interval 39–107 (TREYLQDKLK…PVHINIEEIR (69 aa)).

Belongs to the universal ribosomal protein uS3 family. In terms of assembly, part of the 30S ribosomal subunit. Forms a tight complex with proteins S10 and S14.

In terms of biological role, binds the lower part of the 30S subunit head. Binds mRNA in the 70S ribosome, positioning it for translation. The sequence is that of Small ribosomal subunit protein uS3 from Pseudomonas putida (strain ATCC 700007 / DSM 6899 / JCM 31910 / BCRC 17059 / LMG 24140 / F1).